The chain runs to 286 residues: Polyamine aminopropyltransferase (286 aa).

In terms of domain architecture, PABS spans 5 to 238 (TMWHETLHDQ…GIMTFAWATD (234 aa)). Gln33 contributes to the S-methyl-5'-thioadenosine binding site. Positions 64 and 88 each coordinate spermidine. Residues Glu108 and 140–141 (DG) contribute to the S-methyl-5'-thioadenosine site. Asp158 serves as the catalytic Proton acceptor. Spermidine is bound at residue 158–161 (DCTD). Position 165 (Pro165) interacts with S-methyl-5'-thioadenosine.

This sequence belongs to the spermidine/spermine synthase family. As to quaternary structure, homodimer or homotetramer.

It localises to the cytoplasm. The catalysed reaction is S-adenosyl 3-(methylsulfanyl)propylamine + putrescine = S-methyl-5'-thioadenosine + spermidine + H(+). It participates in amine and polyamine biosynthesis; spermidine biosynthesis; spermidine from putrescine: step 1/1. Catalyzes the irreversible transfer of a propylamine group from the amino donor S-adenosylmethioninamine (decarboxy-AdoMet) to putrescine (1,4-diaminobutane) to yield spermidine. In Salmonella enteritidis PT4 (strain P125109), this protein is Polyamine aminopropyltransferase.